The chain runs to 601 residues: MENSPDSPQPLELGVAAGRVSPPEGRRRGGREAEDGPAGRAVDSGGQGAAAAAARSSLGDPTSPSQLGCGAGSDLKDGASSSPAASEVPSRGQHKVTASPELAEAAAGRGSGPVGDTGTCRVEQAAEEPSSTGAPSSSCSEPSPPGDSPSLDSLESFSNLHSFPSSSEFNSEEGAETRVPEDVEEGAAGPPRAAPLCKEEEEDPAQVLAASKERFPGQSVYHIKWIQWKEENTPIITQNENGPCPLLAILNVLLLAWKVKLPPMMEIITAEQLMEYLGDYMLEAKPKEISEIQRVNYEQNMSDAMAILHKLQTGLDVNVRFTGVRVFEYTPECIVFDLLDIPLYHGWLVDPQIDDIVKAVGNCSYNQLVEKIISCKQSDNSQLVSEGFVAEQFLNNTATQLTYHGLCELTSTVQEGELCVFFRNNHFSTMTKYKGQLYLLVTDQGFLTEEKIVWESLHNVDGDGNFCDSEFHLRPPSDPETVYKGQQDQIDQDYLMALSLQQEQQSQEINWEQIPEGISDLELAKKLQEEEDRRASQYYQEQEQAQAVVTTTTPSTQAQQGQPAQASPSSIKQPGNSERKRKEPREKDKEKEKEKNSCVIL.

A disordered region spans residues 1–205; the sequence is MENSPDSPQP…LCKEEEEDPA (205 aa). Over residues 24–34 the composition is skewed to basic and acidic residues; sequence EGRRRGGREAE. Thr-62 bears the Phosphothreonine mark. Ser-82 is modified (phosphoserine). Low complexity-rich tracts occupy residues 127–141, 148–169, and 186–195; these read EEPS…SCSE, SPSL…SSEF, and GAAGPPRAAP. The Nucleophile role is filled by Cys-244. Residue His-426 is the Proton acceptor of the active site. The interval 485-537 is ubiquitin-binding domain (UBD); that stretch reads GQQDQIDQDYLMALSLQQEQQSQEINWEQIPEGISDLELAKKLQEEEDRRASQ. A disordered region spans residues 534-601; it reads RASQYYQEQE…EKEKNSCVIL (68 aa). Residues 536–570 show a composition bias toward low complexity; sequence SQYYQEQEQAQAVVTTTTPSTQAQQGQPAQASPSS. Residues 577 to 601 are compositionally biased toward basic and acidic residues; sequence SERKRKEPREKDKEKEKEKNSCVIL.

Belongs to the MINDY deubiquitinase family. FAM63 subfamily.

The enzyme catalyses Thiol-dependent hydrolysis of ester, thioester, amide, peptide and isopeptide bonds formed by the C-terminal Gly of ubiquitin (a 76-residue protein attached to proteins as an intracellular targeting signal).. Its function is as follows. Hydrolase that can remove 'Lys-48'-linked conjugated ubiquitin from proteins. Can also bind to polyubiquitin chains of different linkage types, including 'Lys-6', 'Lys-11', 'Lys-29', 'Lys-33' and 'Lys-63'. May play a regulatory role at the level of protein turnover. The chain is Ubiquitin carboxyl-terminal hydrolase MINDY-2 (Mindy2) from Mus musculus (Mouse).